A 267-amino-acid chain; its full sequence is uncharacterized protein (267 aa).

Residues 37 to 62 are a coiled coil; it reads DSSNNYKKKYKKYKRKYIDLKKQLNY.

This is an uncharacterized protein from Acanthamoeba polyphaga (Amoeba).